Reading from the N-terminus, the 64-residue chain is Small ribosomal subunit protein eS17 (64 aa).

This sequence belongs to the eukaryotic ribosomal protein eS17 family.

The protein is Small ribosomal subunit protein eS17 of Methanosarcina acetivorans (strain ATCC 35395 / DSM 2834 / JCM 12185 / C2A).